The sequence spans 219 residues: Oligoribonuclease (219 aa).

The Exonuclease domain maps to Leu30–Leu193. Tyr151 is an active-site residue.

The protein belongs to the oligoribonuclease family.

Its subcellular location is the cytoplasm. Its function is as follows. 3'-to-5' exoribonuclease specific for small oligoribonucleotides. The sequence is that of Oligoribonuclease from Ralstonia nicotianae (strain ATCC BAA-1114 / GMI1000) (Ralstonia solanacearum).